Reading from the N-terminus, the 587-residue chain is ATF/CREB activator 2 (587 aa).

Disordered regions lie at residues 1-62, 123-144, 169-195, and 381-423; these read MFTG…SRSL, LRQQQQQDQRQQSPSMKTEEES, NLSQLSSTRKSAPNDSTTAPTNASNIA, and TGGE…IPGT. Basic and acidic residues predominate over residues 16–29; it reads KQKDNNKRGIDDTS. 2 stretches are compositionally biased toward low complexity: residues 39 to 57 and 123 to 134; these read SVSDTSAAATTTSTMNNSA and LRQQQQQDQRQQ. Phosphoserine occurs at positions 171 and 179. Over residues 385 to 395 the composition is skewed to basic and acidic residues; it reads NRGKSALRESH. Residues 396-418 show a composition bias toward polar residues; that stretch reads SNPSFTPKSQGSHLNLAANTQGN. Residue serine 399 is modified to Phosphoserine. The bZIP domain maps to 425-488; the sequence is AWKRARLLER…SKFKKFSKIH (64 aa). Positions 427 to 447 are basic motif; that stretch reads KRARLLERNRIAASKCRQRKK. A leucine-zipper region spans residues 453–467; sequence LQKEFNEIKDENRIL. The interval 552-587 is disordered; it reads SQRFGSDTDDDDIDLKPVEGGKDPDNQSLPNSEKIK. Serine 557 carries the post-translational modification Phosphoserine. Threonine 559 is modified (phosphothreonine). Basic and acidic residues predominate over residues 565–576; it reads DLKPVEGGKDPD. The segment covering 577-587 has biased composition (polar residues); that stretch reads NQSLPNSEKIK.

The protein belongs to the bZIP family.

Its subcellular location is the nucleus. Transcriptional activator of promoters containing ATF/CREB sites. Can independently stimulate transcription through ATF/CREB sites. Important for a variety of biological functions including growth on non-optimal carbon sources. This is ATF/CREB activator 2 (CST6) from Saccharomyces cerevisiae (strain ATCC 204508 / S288c) (Baker's yeast).